The following is a 330-amino-acid chain: Methionyl-tRNA formyltransferase (330 aa).

Serine 121–proline 124 is a binding site for (6S)-5,6,7,8-tetrahydrofolate.

It belongs to the Fmt family.

The catalysed reaction is L-methionyl-tRNA(fMet) + (6R)-10-formyltetrahydrofolate = N-formyl-L-methionyl-tRNA(fMet) + (6S)-5,6,7,8-tetrahydrofolate + H(+). In terms of biological role, attaches a formyl group to the free amino group of methionyl-tRNA(fMet). The formyl group appears to play a dual role in the initiator identity of N-formylmethionyl-tRNA by promoting its recognition by IF2 and preventing the misappropriation of this tRNA by the elongation apparatus. This chain is Methionyl-tRNA formyltransferase, found in Burkholderia orbicola (strain MC0-3).